We begin with the raw amino-acid sequence, 397 residues long: Tyrosine--tRNA ligase (397 aa).

The 'HIGH' region motif lies at 41 to 50; it reads PTAPDLHLGH. The 'KMSKS' region motif lies at 225-229; it reads KMSKS. ATP is bound at residue Lys-228. Residues 340 to 396 form the S4 RNA-binding domain; sequence AFLADSGLAGSRGEAKRLIKQGALSLDGEKLDDPNTPLTAGEYVVRLGKKRFLRLIV.

It belongs to the class-I aminoacyl-tRNA synthetase family. TyrS type 2 subfamily. Homodimer.

The protein resides in the cytoplasm. The enzyme catalyses tRNA(Tyr) + L-tyrosine + ATP = L-tyrosyl-tRNA(Tyr) + AMP + diphosphate + H(+). Functionally, catalyzes the attachment of tyrosine to tRNA(Tyr) in a two-step reaction: tyrosine is first activated by ATP to form Tyr-AMP and then transferred to the acceptor end of tRNA(Tyr). This is Tyrosine--tRNA ligase from Oleidesulfovibrio alaskensis (strain ATCC BAA-1058 / DSM 17464 / G20) (Desulfovibrio alaskensis).